A 674-amino-acid polypeptide reads, in one-letter code: Probable protein phosphatase 2C 66 (674 aa).

Position 125 is a phosphoserine (Ser125). 2 disordered regions span residues 153-175 (YSGP…RKKP) and 202-247 (KSVI…KQSM). Positions 244–665 (KQSMNSVLDV…DDVSVIVISL (422 aa)) constitute a PPM-type phosphatase domain. Asp282 and Gly283 together coordinate Mn(2+). The span at 373–384 (NNKTKSDNRCDQ) shows a compositional bias: basic and acidic residues. The interval 373 to 392 (NNKTKSDNRCDQKGSNSTTT) is disordered. Residues Asp593 and Asp656 each coordinate Mn(2+).

Belongs to the PP2C family. Mg(2+) serves as cofactor. Requires Mn(2+) as cofactor. In terms of tissue distribution, expressed at low level in seedlings, roots, leaves, stems, young inflorescences, flowers and siliques.

Its subcellular location is the nucleus. The enzyme catalyses O-phospho-L-seryl-[protein] + H2O = L-seryl-[protein] + phosphate. It carries out the reaction O-phospho-L-threonyl-[protein] + H2O = L-threonyl-[protein] + phosphate. This Arabidopsis thaliana (Mouse-ear cress) protein is Probable protein phosphatase 2C 66 (PLL2).